The following is a 232-amino-acid chain: Ubiquinone biosynthesis O-methyltransferase (232 aa).

S-adenosyl-L-methionine-binding residues include R36, G55, D76, and M120.

It belongs to the methyltransferase superfamily. UbiG/COQ3 family.

It carries out the reaction a 3-demethylubiquinol + S-adenosyl-L-methionine = a ubiquinol + S-adenosyl-L-homocysteine + H(+). It catalyses the reaction a 3-(all-trans-polyprenyl)benzene-1,2-diol + S-adenosyl-L-methionine = a 2-methoxy-6-(all-trans-polyprenyl)phenol + S-adenosyl-L-homocysteine + H(+). Its pathway is cofactor biosynthesis; ubiquinone biosynthesis. In terms of biological role, O-methyltransferase that catalyzes the 2 O-methylation steps in the ubiquinone biosynthetic pathway. The polypeptide is Ubiquinone biosynthesis O-methyltransferase (Burkholderia multivorans (strain ATCC 17616 / 249)).